The sequence spans 279 residues: Large ribosomal subunit protein uL2 (279 aa).

2 disordered regions span residues 1 to 59 (MGIR…GGHK) and 224 to 279 (VAMN…KNKR). The segment covering 50–59 (TTRHKGGGHK) has biased composition (basic residues). A compositionally biased stretch (basic and acidic residues) spans 253–268 (REGRTRRPNKESDKLI). A compositionally biased stretch (basic residues) spans 269–279 (VRRRRTGKNKR).

It belongs to the universal ribosomal protein uL2 family. In terms of assembly, part of the 50S ribosomal subunit. Forms a bridge to the 30S subunit in the 70S ribosome.

One of the primary rRNA binding proteins. Required for association of the 30S and 50S subunits to form the 70S ribosome, for tRNA binding and peptide bond formation. It has been suggested to have peptidyltransferase activity; this is somewhat controversial. Makes several contacts with the 16S rRNA in the 70S ribosome. The polypeptide is Large ribosomal subunit protein uL2 (Pseudarthrobacter chlorophenolicus (strain ATCC 700700 / DSM 12829 / CIP 107037 / JCM 12360 / KCTC 9906 / NCIMB 13794 / A6) (Arthrobacter chlorophenolicus)).